We begin with the raw amino-acid sequence, 366 residues long: Bacteriochlorophyll a protein (366 aa).

5 residues coordinate bacteriochlorophyll a: His-111, His-146, His-290, His-297, and His-298.

As to quaternary structure, homotrimer. Each subunit contains 7 molecules of bacteriochlorophyll a.

Its function is as follows. Intermediary in the transfer of excitation energy from the chlorophyll to the reaction centers. The sequence is that of Bacteriochlorophyll a protein (fmoA) from Chlorobaculum tepidum (strain ATCC 49652 / DSM 12025 / NBRC 103806 / TLS) (Chlorobium tepidum).